Reading from the N-terminus, the 69-residue chain is Small, acid-soluble spore protein C1 (69 aa).

The protein belongs to the alpha/beta-type SASP family.

Its function is as follows. SASP are bound to spore DNA. They are double-stranded DNA-binding proteins that cause DNA to change to an a-like conformation. They protect the DNA backbone from chemical and enzymatic cleavage and are thus involved in dormant spore's high resistance to UV light. The protein is Small, acid-soluble spore protein C1 (SASP-C1) of Priestia megaterium (Bacillus megaterium).